Consider the following 90-residue polypeptide: Probable Fe(2+)-trafficking protein (90 aa).

This sequence belongs to the Fe(2+)-trafficking protein family.

Could be a mediator in iron transactions between iron acquisition and iron-requiring processes, such as synthesis and/or repair of Fe-S clusters in biosynthetic enzymes. This Nitrosomonas europaea (strain ATCC 19718 / CIP 103999 / KCTC 2705 / NBRC 14298) protein is Probable Fe(2+)-trafficking protein.